An 851-amino-acid polypeptide reads, in one-letter code: DNA mismatch repair protein MutS (851 aa).

614-621 contacts ATP; that stretch reads GPNMGGKS.

The protein belongs to the DNA mismatch repair MutS family.

In terms of biological role, this protein is involved in the repair of mismatches in DNA. It is possible that it carries out the mismatch recognition step. This protein has a weak ATPase activity. This chain is DNA mismatch repair protein MutS, found in Yersinia pseudotuberculosis serotype O:1b (strain IP 31758).